Consider the following 618-residue polypeptide: MPAYRSRTTTHGRNMAGARALWRATGMKDGDFGKPIIAIANSFTQFVPGHVHLKDMGSLVASAIEEVGGIAKEFNTIAVDDGIAMGHGGMLYSLPSRELIADSVEYMVNAHCADAIVCISNCDKITPGMLMASMRLNIPVVFVSGGPMEAGKINGPGVTRKLDLIDSMVAAANPDVSDSESEQIERSACPTCGSCSGMFTANSMNCLTEALGLSLPGNGSLLATHNDRRELFLSAGRRIVELARRWYEQDDASVLPRSIATRAAFENAMTLDIAMGGSTNTVLHLLAAAREGEVDFHMHDIDRLSRRVPNLCKVAPAKNDVHMEDVHRAGGIPAILGELDRAGLIHKDVPTVYAPTLGDALKKWDILNGDEEAAHLFKAAPGNVRTVHAFSQSSRYHELDQDREGGVLRDKAHAFSQDGGLAVLYGNLAEDGAIVKTAGVEASILTFTGTARVFESQDDAVAAILGNRIVAGDVVVIRYEGPKGGPGMQEMLYPTSYLKSKGLGKVCALITDGRFSGGSSGLSIGHMSPEAAEGGLIGLVEDGDRIEIDIPNRTLHLAVSDSDIADRRERMNARGASAWKPNRERVVSKALQAYAAMTTSAAHGAVRDLSQIIVKTRI.

D81 lines the Mg(2+) pocket. C122 contributes to the [2Fe-2S] cluster binding site. Positions 123 and 124 each coordinate Mg(2+). An N6-carboxylysine modification is found at K124. C195 lines the [2Fe-2S] cluster pocket. A Mg(2+)-binding site is contributed by E490. S516 acts as the Proton acceptor in catalysis.

It belongs to the IlvD/Edd family. As to quaternary structure, homodimer. Requires [2Fe-2S] cluster as cofactor. The cofactor is Mg(2+).

It catalyses the reaction (2R)-2,3-dihydroxy-3-methylbutanoate = 3-methyl-2-oxobutanoate + H2O. The catalysed reaction is (2R,3R)-2,3-dihydroxy-3-methylpentanoate = (S)-3-methyl-2-oxopentanoate + H2O. The protein operates within amino-acid biosynthesis; L-isoleucine biosynthesis; L-isoleucine from 2-oxobutanoate: step 3/4. It functions in the pathway amino-acid biosynthesis; L-valine biosynthesis; L-valine from pyruvate: step 3/4. Functions in the biosynthesis of branched-chain amino acids. Catalyzes the dehydration of (2R,3R)-2,3-dihydroxy-3-methylpentanoate (2,3-dihydroxy-3-methylvalerate) into 2-oxo-3-methylpentanoate (2-oxo-3-methylvalerate) and of (2R)-2,3-dihydroxy-3-methylbutanoate (2,3-dihydroxyisovalerate) into 2-oxo-3-methylbutanoate (2-oxoisovalerate), the penultimate precursor to L-isoleucine and L-valine, respectively. This is Dihydroxy-acid dehydratase from Gluconobacter oxydans (strain 621H) (Gluconobacter suboxydans).